A 338-amino-acid chain; its full sequence is Ketol-acid reductoisomerase (NADP(+)) (338 aa).

The KARI N-terminal Rossmann domain maps to 1 to 181; the sequence is MKIYYDKDCN…GGGRAGIIET (181 aa). Residues 24–27, Arg-47, Ser-50, Ser-52, and 82–85 each bind NADP(+); these read YGSQ and DETQ. Residue His-107 is part of the active site. Position 133 (Gly-133) interacts with NADP(+). In terms of domain architecture, KARI C-terminal knotted spans 182–327; that stretch reads SFKEETETDL…ARLRSMMSWI (146 aa). Mg(2+)-binding residues include Asp-190, Glu-194, Glu-226, and Glu-230. Residue Ser-251 coordinates substrate.

This sequence belongs to the ketol-acid reductoisomerase family. Mg(2+) is required as a cofactor.

It carries out the reaction (2R)-2,3-dihydroxy-3-methylbutanoate + NADP(+) = (2S)-2-acetolactate + NADPH + H(+). The catalysed reaction is (2R,3R)-2,3-dihydroxy-3-methylpentanoate + NADP(+) = (S)-2-ethyl-2-hydroxy-3-oxobutanoate + NADPH + H(+). Its pathway is amino-acid biosynthesis; L-isoleucine biosynthesis; L-isoleucine from 2-oxobutanoate: step 2/4. The protein operates within amino-acid biosynthesis; L-valine biosynthesis; L-valine from pyruvate: step 2/4. Its function is as follows. Involved in the biosynthesis of branched-chain amino acids (BCAA). Catalyzes an alkyl-migration followed by a ketol-acid reduction of (S)-2-acetolactate (S2AL) to yield (R)-2,3-dihydroxy-isovalerate. In the isomerase reaction, S2AL is rearranged via a Mg-dependent methyl migration to produce 3-hydroxy-3-methyl-2-ketobutyrate (HMKB). In the reductase reaction, this 2-ketoacid undergoes a metal-dependent reduction by NADPH to yield (R)-2,3-dihydroxy-isovalerate. The chain is Ketol-acid reductoisomerase (NADP(+)) from Geobacter metallireducens (strain ATCC 53774 / DSM 7210 / GS-15).